The primary structure comprises 254 residues: Wall-associated protein (254 aa).

The tract at residues 25 to 46 is disordered; it reads DRVEPKEEPPKVPQAPKRDLKP.

It is found in the secreted. Its subcellular location is the cell wall. The sequence is that of Wall-associated protein (wapA') from Geobacillus stearothermophilus (Bacillus stearothermophilus).